Here is a 233-residue protein sequence, read N- to C-terminus: Orotidine 5'-phosphate decarboxylase (233 aa).

Substrate-binding positions include Asp11, Lys34, 61-70 (DLKLHDIPNT), Thr117, Arg179, Gln188, Gly208, and Arg209. The active-site Proton donor is Lys63.

This sequence belongs to the OMP decarboxylase family. Type 1 subfamily. Homodimer.

The enzyme catalyses orotidine 5'-phosphate + H(+) = UMP + CO2. It participates in pyrimidine metabolism; UMP biosynthesis via de novo pathway; UMP from orotate: step 2/2. In terms of biological role, catalyzes the decarboxylation of orotidine 5'-monophosphate (OMP) to uridine 5'-monophosphate (UMP). This is Orotidine 5'-phosphate decarboxylase from Streptococcus pneumoniae (strain Hungary19A-6).